Consider the following 461-residue polypeptide: Fumarate hydratase class II (461 aa).

Substrate-binding positions include 97–99 (SGT), 127–130 (HPND), 137–139 (SSN), and T185. Catalysis depends on H186, which acts as the Proton donor/acceptor. The active site involves S316. Substrate is bound by residues S317 and 322–324 (KVN).

The protein belongs to the class-II fumarase/aspartase family. Fumarase subfamily. As to quaternary structure, homotetramer.

It is found in the cytoplasm. The catalysed reaction is (S)-malate = fumarate + H2O. The protein operates within carbohydrate metabolism; tricarboxylic acid cycle; (S)-malate from fumarate: step 1/1. Involved in the TCA cycle. Catalyzes the stereospecific interconversion of fumarate to L-malate. The protein is Fumarate hydratase class II of Staphylococcus haemolyticus (strain JCSC1435).